The chain runs to 359 residues: Phospho-N-acetylmuramoyl-pentapeptide-transferase (359 aa).

10 consecutive transmembrane segments (helical) span residues 27–47 (GAFF…INAL), 70–90 (TPTM…LLWA), 97–117 (VWLV…DDWA), 133–153 (LAIG…VHPE), 167–187 (VLLN…VGSA), 198–218 (GLAI…AYAV), 238–258 (LLIF…YNAP), 261–281 (AVFM…AIAV), 287–307 (IVLA…IVQV), and 336–356 (QVVI…LATL).

Belongs to the glycosyltransferase 4 family. MraY subfamily. Requires Mg(2+) as cofactor.

It localises to the cell inner membrane. The enzyme catalyses UDP-N-acetyl-alpha-D-muramoyl-L-alanyl-gamma-D-glutamyl-meso-2,6-diaminopimeloyl-D-alanyl-D-alanine + di-trans,octa-cis-undecaprenyl phosphate = di-trans,octa-cis-undecaprenyl diphospho-N-acetyl-alpha-D-muramoyl-L-alanyl-D-glutamyl-meso-2,6-diaminopimeloyl-D-alanyl-D-alanine + UMP. The protein operates within cell wall biogenesis; peptidoglycan biosynthesis. In terms of biological role, catalyzes the initial step of the lipid cycle reactions in the biosynthesis of the cell wall peptidoglycan: transfers peptidoglycan precursor phospho-MurNAc-pentapeptide from UDP-MurNAc-pentapeptide onto the lipid carrier undecaprenyl phosphate, yielding undecaprenyl-pyrophosphoryl-MurNAc-pentapeptide, known as lipid I. This chain is Phospho-N-acetylmuramoyl-pentapeptide-transferase, found in Jannaschia sp. (strain CCS1).